A 94-amino-acid polypeptide reads, in one-letter code: MTKSELIERLAGQQSHVPAKAVEDAVKEMLEHMAATLADGERIEIRGFGSFSLHYRAPRVGRNPKTGDKVELDGKYVPHFKPGKELRDRANIYG.

It belongs to the bacterial histone-like protein family. In terms of assembly, heterodimer of an alpha and a beta chain.

This protein is one of the two subunits of integration host factor, a specific DNA-binding protein that functions in genetic recombination as well as in transcriptional and translational control. This chain is Integration host factor subunit beta, found in Serratia proteamaculans (strain 568).